A 471-amino-acid chain; its full sequence is Chromosomal replication initiator protein DnaA (471 aa).

Residues 1–77 form a domain I, interacts with DnaA modulators region; it reads MELNSSFWTL…YTEISDTYGK (77 aa). The tract at residues 77–130 is domain II; the sequence is KPFEVEFSITGNKINSHIETSTTPDEVLSGSEILQAQLARAQNIQPTQPRSSSD. The interval 131–349 is domain III, AAA+ region; that stretch reads TLNSELTFST…GNLKKVKMFS (219 aa). ATP-binding residues include G176, G178, K179, and T180. The domain IV, binds dsDNA stretch occupies residues 350-471; it reads ELQGLPIDHE…EQRIHNITRV (122 aa).

The protein belongs to the DnaA family. As to quaternary structure, oligomerizes as a right-handed, spiral filament on DNA at oriC.

The protein resides in the cytoplasm. In terms of biological role, plays an essential role in the initiation and regulation of chromosomal replication. ATP-DnaA binds to the origin of replication (oriC) to initiate formation of the DNA replication initiation complex once per cell cycle. Binds the DnaA box (a 9 base pair repeat at the origin) and separates the double-stranded (ds)DNA. Forms a right-handed helical filament on oriC DNA; dsDNA binds to the exterior of the filament while single-stranded (ss)DNA is stabiized in the filament's interior. The ATP-DnaA-oriC complex binds and stabilizes one strand of the AT-rich DNA unwinding element (DUE), permitting loading of DNA polymerase. After initiation quickly degrades to an ADP-DnaA complex that is not apt for DNA replication. Binds acidic phospholipids. The polypeptide is Chromosomal replication initiator protein DnaA (Bdellovibrio bacteriovorus (strain ATCC 15356 / DSM 50701 / NCIMB 9529 / HD100)).